A 284-amino-acid chain; its full sequence is Pantothenate synthetase (284 aa).

Position 30–37 (30–37 (MGNLHDGH)) interacts with ATP. Residue His-37 is the Proton donor of the active site. Gln-61 is a (R)-pantoate binding site. Gln-61 is a binding site for beta-alanine. 149–152 (GEKD) is an ATP binding site. Position 155 (Gln-155) interacts with (R)-pantoate. ATP-binding positions include Ile-178 and 186–189 (LSSR).

Belongs to the pantothenate synthetase family. As to quaternary structure, homodimer.

It is found in the cytoplasm. The catalysed reaction is (R)-pantoate + beta-alanine + ATP = (R)-pantothenate + AMP + diphosphate + H(+). Its pathway is cofactor biosynthesis; (R)-pantothenate biosynthesis; (R)-pantothenate from (R)-pantoate and beta-alanine: step 1/1. In terms of biological role, catalyzes the condensation of pantoate with beta-alanine in an ATP-dependent reaction via a pantoyl-adenylate intermediate. The polypeptide is Pantothenate synthetase (Salmonella typhi).